We begin with the raw amino-acid sequence, 589 residues long: uncharacterized protein (589 aa).

A run of 14 helical transmembrane segments spans residues Y90–I110, S128–M148, I162–V182, G189–L209, G217–I237, W245–L265, F284–G304, A311–V331, V355–V375, V390–I410, P419–Y439, G448–V468, A483–Y503, and I545–F565.

The protein belongs to the major facilitator superfamily. TCR/Tet family.

Its subcellular location is the membrane. This is an uncharacterized protein from Schizosaccharomyces pombe (strain 972 / ATCC 24843) (Fission yeast).